The chain runs to 544 residues: POTE ankyrin domain family member B2 (544 aa).

5 ANK repeats span residues 135-167, 168-200, 201-233, 234-266, and 267-299; these read QKRT…VLDN, KKRT…IQDE, YGNT…SKNK, CGLT…ALDR, and YGRT…SQDL. A disordered region spans residues 332–457; it reads SSENSNPEQD…NTGISQDEIL (126 aa). Composition is skewed to basic and acidic residues over residues 340 to 355 and 364 to 375; these read QDLK…RLKV and MSQEPEINKDCD. Over residues 439–457 the composition is skewed to polar residues; it reads TQKQLSEEQNTGISQDEIL.

The protein belongs to the POTE family.

The protein is POTE ankyrin domain family member B2 (POTEB2) of Homo sapiens (Human).